Reading from the N-terminus, the 423-residue chain is Alpha-1-antichymotrypsin (423 aa).

The signal sequence occupies residues 1-23 (MERMLPLLALGLLAAGFCPAVLC). N-linked (GlcNAc...) asparagine glycans are attached at residues Asn33, Asn93, Asn106, Asn127, and Asn186. The DNA-binding element occupies 235-237 (KKK). A glycan (N-linked (GlcNAc...) asparagine) is linked at Asn271. An RCL region spans residues 369–394 (GTEASAATAVKITLLSALVETRTIVR). The O-glycosylated at one site stretch occupies residues 381–389 (TLLSALVET).

The protein belongs to the serpin family. As to quaternary structure, interacts with DNAJC1. In terms of processing, N- and O-glycosylated. In terms of tissue distribution, plasma. Synthesized in the liver. Like the related alpha-1-antitrypsin, its concentration increases in the acute phase of inflammation or infection. Found in the amyloid plaques from the hippocampus of Alzheimer disease brains.

The protein localises to the secreted. Although its physiological function is unclear, it can inhibit neutrophil cathepsin G and mast cell chymase, both of which can convert angiotensin-1 to the active angiotensin-2. The protein is Alpha-1-antichymotrypsin (SERPINA3) of Homo sapiens (Human).